A 568-amino-acid chain; its full sequence is Pre-mRNA-processing protein 45 (568 aa).

3 disordered regions span residues 199–232 (EPPK…AQDQ), 281–449 (LNQN…QQKI), and 545–568 (AGKG…RDEE). The segment covering 286 to 364 (KTMRDDIGKR…SRDGDSDRSL (79 aa)) has biased composition (basic and acidic residues). Residues 365-379 (SRSLSASDRSYSRSR) are compositionally biased toward low complexity. Composition is skewed to basic and acidic residues over residues 395 to 419 (RSPE…LERA), 426 to 440 (ERLE…DLRL), and 557 to 568 (RDGPVRFVRDEE).

Belongs to the SNW family. Associated with the spliceosome.

It localises to the nucleus. Its function is as follows. Involved in pre-mRNA splicing. The polypeptide is Pre-mRNA-processing protein 45 (PRP45) (Yarrowia lipolytica (strain CLIB 122 / E 150) (Yeast)).